The primary structure comprises 504 residues: Maturase K (504 aa).

Belongs to the intron maturase 2 family. MatK subfamily.

It localises to the plastid. Its subcellular location is the chloroplast. Usually encoded in the trnK tRNA gene intron. Probably assists in splicing its own and other chloroplast group II introns. This chain is Maturase K, found in Simmondsia chinensis (Jojoba).